The following is a 154-amino-acid chain: Large ribosomal subunit protein bL17 (154 aa).

Residues 127–154 (TAAKQDRAKRVKGSKKAETEKEGGESAE) are disordered. Positions 141-154 (KKAETEKEGGESAE) are enriched in basic and acidic residues.

Belongs to the bacterial ribosomal protein bL17 family. Part of the 50S ribosomal subunit. Contacts protein L32.

The polypeptide is Large ribosomal subunit protein bL17 (Chlorobaculum parvum (strain DSM 263 / NCIMB 8327) (Chlorobium vibrioforme subsp. thiosulfatophilum)).